Consider the following 295-residue polypeptide: Probable isochorismatase (295 aa).

The segment at 1 to 21 (MGIPKIAGYPLPTPAEFPDNR) is disordered. Positions 207–286 (EIRSQKPLTL…EWWLVIEQAR (80 aa)) constitute a Carrier domain. Ser247 carries the O-(pantetheine 4'-phosphoryl)serine modification.

This sequence belongs to the isochorismatase family. Requires pantetheine 4'-phosphate as cofactor.

The enzyme catalyses isochorismate + H2O = (2S,3S)-2,3-dihydroxy-2,3-dihydrobenzoate + pyruvate. It participates in siderophore biosynthesis; vulnibactin biosynthesis. Its function is as follows. Involved in the biosynthesis of the catechol siderophore vulnibactin. Vulnibactin is a chelating compound involved in transporting iron from the bacterial environment into the cell cytoplasm. In Vibrio vulnificus (strain CMCP6), this protein is Probable isochorismatase (venB).